A 234-amino-acid chain; its full sequence is Glucosamine-6-phosphate deaminase (234 aa).

The active-site Proton acceptor; for enolization step is Asp62. Asn128 acts as the For ring-opening step in catalysis. Residue His130 is the Proton acceptor; for ring-opening step of the active site. The active-site For ring-opening step is Glu135.

This sequence belongs to the glucosamine/galactosamine-6-phosphate isomerase family. NagB subfamily.

It catalyses the reaction alpha-D-glucosamine 6-phosphate + H2O = beta-D-fructose 6-phosphate + NH4(+). The protein operates within amino-sugar metabolism; N-acetylneuraminate degradation; D-fructose 6-phosphate from N-acetylneuraminate: step 5/5. Functionally, catalyzes the reversible isomerization-deamination of glucosamine 6-phosphate (GlcN6P) to form fructose 6-phosphate (Fru6P) and ammonium ion. This chain is Glucosamine-6-phosphate deaminase, found in Streptococcus pyogenes serotype M18 (strain MGAS8232).